Consider the following 1018-residue polypeptide: Ubiquitin carboxyl-terminal hydrolase 35 (1018 aa).

In terms of domain architecture, USP spans 441 to 926 (IGLINLGNTC…TAYVLFYRQR (486 aa)). Cysteine 450 serves as the catalytic Nucleophile. Disordered regions lie at residues 544-566 (QKLK…STSV) and 610-757 (RLGS…GSEG). The segment covering 552–561 (PSPPEEPPAP) has biased composition (pro residues). A Phosphoserine modification is found at serine 613. Composition is skewed to basic and acidic residues over residues 673–691 (QEER…TEKE), 699–709 (STRGEGEREKE), and 718–728 (KVEKETEKEAE). Histidine 862 serves as the catalytic Proton acceptor. Positions 984-1011 (HWGRGFDEDKDEDEGSPGGCNPAGGNGG) are disordered. Residues 999 to 1011 (SPGGCNPAGGNGG) show a composition bias toward gly residues.

Belongs to the peptidase C19 family. Homodimer (via C-terminal region). Interacts with HSP90AA1. Post-translationally, ubiquitinated by CHIP/STUB1 in an HSP90-dependent manner; leading to proteasomal degradation. This ubiquitination can be reversed through auto-deubiquitinating activity. Expressed in testis, pancreas and skeletal muscle.

The protein resides in the cytoplasm. It is found in the mitochondrion. It carries out the reaction Thiol-dependent hydrolysis of ester, thioester, amide, peptide and isopeptide bonds formed by the C-terminal Gly of ubiquitin (a 76-residue protein attached to proteins as an intracellular targeting signal).. Deubiquitinase that plays a role in different processes including cell cycle regulation, mitophagy or endoplasmic reticulum stress. Inhibits TNFalpha-induced NF-kappa-B activation through stabilizing TNIP2 protein via deubiquitination. Plays an essential role during mitosis by deubiquitinating and thereby regulating the levels of Aurora B/AURKB protein. In addition, regulates the protein levels of other key component of the chromosomal passenger complex (CPC) such as survivin/BIRC5 or Borealin/CDCA8 by enhancing their stability. Regulates the degradation of mitochondria through the process of autophagy termed mitophagy. The sequence is that of Ubiquitin carboxyl-terminal hydrolase 35 (USP35) from Homo sapiens (Human).